The chain runs to 349 residues: Green-sensitive opsin-3 (349 aa).

Residues 1-36 are Extracellular-facing; it reads MNGTEGNNFYIPMSNRTGLVRSPYEYPQYYLAEPWQ. Residues N2 and N15 are each glycosylated (N-linked (GlcNAc...) asparagine). Residues 37–61 form a helical membrane-spanning segment; sequence FKLLAVYMFFLMCFGFPINGLTLVV. The Cytoplasmic portion of the chain corresponds to 62-73; it reads TAQHKKLRQPLN. Residues 74–99 traverse the membrane as a helical segment; it reads FILVNLAVAGTIMVCFGFTVTFYTAI. Residues 100 to 113 lie on the Extracellular side of the membrane; it reads NGYFVLGPTGCAIE. A disulfide bridge connects residues C110 and C187. A helical membrane pass occupies residues 114–133; it reads GFMATLGGQISLWSLVVLAI. Residues 134–152 are Cytoplasmic-facing; that stretch reads ERYIVVCKPMGSFKFSSNH. Residues 153 to 176 traverse the membrane as a helical segment; sequence AFAGIGFTWIMALSCAAPPLVGWS. Topologically, residues 177 to 202 are extracellular; that stretch reads RYIPEGMQCSCGPDYYTLNPDYNNES. N-linked (GlcNAc...) asparagine glycosylation occurs at N200. The chain crosses the membrane as a helical span at residues 203–230; the sequence is YVLYMFCCHFIFPVTTIFFTYGRLVCTV. The Cytoplasmic segment spans residues 231–252; sequence KAAAAQQQESESTQKAEREVTR. A helical membrane pass occupies residues 253-276; it reads MVILMVLGFLVAWTPYASVAAWIF. At 277–284 the chain is on the extracellular side; sequence FNRGAAFS. A helical transmembrane segment spans residues 285–309; the sequence is AQFMAVPAFFSKSSSIFNPIIYVLL. The residue at position 296 (K296) is an N6-(retinylidene)lysine. The Cytoplasmic segment spans residues 310–349; the sequence is NKQFRNCMLTTLFCGKNPLGDDESSTVSTSKTEVSSVSPA. Residues 329 to 349 form a disordered region; the sequence is GDDESSTVSTSKTEVSSVSPA. A compositionally biased stretch (low complexity) spans 334–349; that stretch reads STVSTSKTEVSSVSPA.

Belongs to the G-protein coupled receptor 1 family. Opsin subfamily. In terms of processing, phosphorylated on some or all of the serine and threonine residues present in the C-terminal region.

Its subcellular location is the membrane. Its function is as follows. Visual pigments are the light-absorbing molecules that mediate vision. They consist of an apoprotein, opsin, covalently linked to cis-retinal. The protein is Green-sensitive opsin-3 (opn1mw3) of Danio rerio (Zebrafish).